Reading from the N-terminus, the 705-residue chain is MKPIKKSITYGHHTLTIETGEIAKQAHGAVMVSMDDTVVLVTVVGDKKTKPGQDFFPLTVDYQEKFYSAGRIPGSFFKREGRPSEKEILTSRLIDRPIRPLFPDGFYNEVQVIAMVLSSDAEIDADIPATIGASAALILSGIPFDGPIGAARVGYIDNEYVLNPTTTQLNKSQLNLVVAGTQKAVLMVESEANELSEDVMLGAVTYGHDQMQQVINMINELADETGVTAWDWQPAEKDHSLIEKITQLAEADLRDAFRLKQKSVRTEAISEIWQRVFTELKAGTEEGPSEQTIKEIGFALEAKIVRNSILDGESRIDGRGTRTVRPITIRHGVLPRTHGSALFTRGETQALVVTTLGTARDEQKIDALQGDYSERFMLHYNMPPFATGETGRVGSPKRREIGHGRLAKRALLAVLPPVEEFGYAMRVVSEVTESNGSSSMASVCGGCLALMDAGAPLKAHVAGIAMGLIKEGNRFAVLTDILGDEDHLGDMDFKVAGTEEGITALQMDIKIQGITKEIMQVALLQAKEGRLHILDIMKQSLPIARDSVSVHAPRIIKFKINPEKIRDVIGKGGAVIRALTEETGTTIDISDDGSVTIASISNEGGEQAKRRIENITADVEVGKIYEGTVLKLLDFGAIVSILPGKDGLLHISQIANERVESVADHLKEGQIIRVKVLEADDKGRLRLSMKAASTEAAATPENGEK.

Asp486 and Asp492 together coordinate Mg(2+). The region spanning 553-612 is the KH domain; the sequence is PRIIKFKINPEKIRDVIGKGGAVIRALTEETGTTIDISDDGSVTIASISNEGGEQAKRRI. Residues 622–690 form the S1 motif domain; it reads GKIYEGTVLK…DKGRLRLSMK (69 aa).

The protein belongs to the polyribonucleotide nucleotidyltransferase family. Mg(2+) is required as a cofactor.

The protein localises to the cytoplasm. It carries out the reaction RNA(n+1) + phosphate = RNA(n) + a ribonucleoside 5'-diphosphate. Involved in mRNA degradation. Catalyzes the phosphorolysis of single-stranded polyribonucleotides processively in the 3'- to 5'-direction. The sequence is that of Polyribonucleotide nucleotidyltransferase from Nitrosomonas eutropha (strain DSM 101675 / C91 / Nm57).